The sequence spans 406 residues: Elongation factor Ts, mitochondrial (406 aa).

A disordered region spans residues 387 to 406 (ARPSDETSFADQVKEAAGLA).

This sequence belongs to the EF-Ts family.

It localises to the mitochondrion. In terms of biological role, associates with the EF-Tu.GDP complex and induces the exchange of GDP to GTP. It remains bound to the aminoacyl-tRNA.EF-Tu.GTP complex up to the GTP hydrolysis stage on the ribosome. In Malassezia globosa (strain ATCC MYA-4612 / CBS 7966) (Dandruff-associated fungus), this protein is Elongation factor Ts, mitochondrial.